The sequence spans 104 residues: uncharacterized protein (104 aa).

The interval 55–104 is disordered; that stretch reads RPFSSDRINRPFSPDKKGEPIFPDKRDRPFSPDRINRPFSPDKKGEPIFP.

Its subcellular location is the plastid. This is an uncharacterized protein from Euglena longa (Euglenophycean alga).